We begin with the raw amino-acid sequence, 1162 residues long: ATP-dependent helicase/deoxyribonuclease subunit B (1162 aa).

The UvrD-like helicase ATP-binding domain maps to 1–275 (MELNAYIGRA…QFFKQQYRFN (275 aa)). 8-15 (GRAGTGKS) is a binding site for ATP. Positions 269-583 (KQQYRFNNKD…SIGTMDLAKV (315 aa)) constitute a UvrD-like helicase C-terminal domain. The [4Fe-4S] cluster site is built by Cys-784, Cys-1117, Cys-1120, and Cys-1126.

The protein belongs to the helicase family. AddB/RexB type 1 subfamily. Heterodimer of AddA and AddB. Requires Mg(2+) as cofactor. [4Fe-4S] cluster serves as cofactor.

In terms of biological role, the heterodimer acts as both an ATP-dependent DNA helicase and an ATP-dependent, dual-direction single-stranded exonuclease. Recognizes the chi site generating a DNA molecule suitable for the initiation of homologous recombination. The AddB subunit has 5' -&gt; 3' nuclease activity but not helicase activity. This is ATP-dependent helicase/deoxyribonuclease subunit B from Staphylococcus haemolyticus (strain JCSC1435).